The sequence spans 498 residues: uncharacterized protein (498 aa).

Position 329–336 (329–336 (GNPGTGKS)) interacts with ATP.

The protein resides in the secreted. The protein localises to the cell wall. This is an uncharacterized protein from Mycobacterium tuberculosis (strain CDC 1551 / Oshkosh).